The chain runs to 375 residues: Odorant receptor 49b (375 aa).

Residues 1-28 are Cytoplasmic-facing; it reads MFEDIQLIYMNIKILRFWALLYDKNLRR. Residues 29–49 form a helical membrane-spanning segment; it reads YVCIGLASFHIFTQIVYMMST. At 50 to 60 the chain is on the extracellular side; that stretch reads NEGLTGIIRNS. The chain crosses the membrane as a helical span at residues 61–77; that stretch reads YMLVLWINTVLRAYLLL. Residues 78-121 are Cytoplasmic-facing; it reads ADHDRYLALIQKLTEAYYDLLNLNDSYISEILDQVNKVGKLMAR. A helical transmembrane segment spans residues 122 to 142; sequence GNLFFGMLTSMGFGLYPLSSS. At 143-176 the chain is on the extracellular side; the sequence is ERVLPFGSKIPGLNEYESPYYEMWYIFQMLITPM. The helical transmembrane segment at 177 to 197 threads the bilayer; that stretch reads GCCMYIPYTSLIVGLIMFGIV. Residues 198–251 are Cytoplasmic-facing; the sequence is RCKALQHRLRQVALKHPYGDRDPRELREEIIACIRYQQSIIEYMDHINELTTMM. Residues 252–272 form a helical membrane-spanning segment; that stretch reads FLFELMAFSALLCALLFMLII. The Extracellular portion of the chain corresponds to 273 to 278; sequence VSGTSQ. A helical transmembrane segment spans residues 279 to 299; it reads LIIVCMYINMILAQILALYWY. The Cytoplasmic portion of the chain corresponds to 300-342; sequence ANELREQNLAVATAAYETEWFTFDVPLRKNILFMMMRAQRPAA. Residues 343–363 traverse the membrane as a helical segment; sequence ILLGNIRPITLELFQNLLNTT. At 364–375 the chain is on the extracellular side; sequence YTFFTVLKRVYG.

It belongs to the insect chemoreceptor superfamily. Heteromeric odorant receptor channel (TC 1.A.69) family. Or30a subfamily. Interacts with Orco. Complexes exist early in the endomembrane system in olfactory sensory neurons (OSNs), coupling these complexes to the conserved ciliary trafficking pathway. Expressed in olfactory sensory neurons in the antenna.

It is found in the cell membrane. Odorant receptor which mediates acceptance or avoidance behavior, depending on its substrates. The odorant receptor repertoire encodes a large collection of odor stimuli that vary widely in identity, intensity, and duration. May form a complex with Orco to form odorant-sensing units, providing sensitive and prolonged odorant signaling and calcium permeability. This is Odorant receptor 49b (Or49b) from Drosophila melanogaster (Fruit fly).